We begin with the raw amino-acid sequence, 715 residues long: Polyribonucleotide nucleotidyltransferase (715 aa).

Mg(2+) is bound by residues Asp-495 and Asp-501. The KH domain maps to 562–621; it reads PRLLTLQIPPDMIGLVIGPGGKTVRGISEQYNVKVDISEEGLVTITAPNETNAKQARAAI. The S1 motif domain maps to 631 to 699; sequence GDVYLGRVTR…SKGRINLTRL (69 aa).

Belongs to the polyribonucleotide nucleotidyltransferase family. Mg(2+) serves as cofactor.

The protein resides in the cytoplasm. The catalysed reaction is RNA(n+1) + phosphate = RNA(n) + a ribonucleoside 5'-diphosphate. Its function is as follows. Involved in mRNA degradation. Catalyzes the phosphorolysis of single-stranded polyribonucleotides processively in the 3'- to 5'-direction. The polypeptide is Polyribonucleotide nucleotidyltransferase (Thermosynechococcus vestitus (strain NIES-2133 / IAM M-273 / BP-1)).